A 236-amino-acid chain; its full sequence is Cell division protein FtsQ (236 aa).

The Cytoplasmic portion of the chain corresponds to 1 to 14 (MWDNHQALNQVADW). A helical membrane pass occupies residues 15–37 (LFTLAGLTTIYLMVQWTIHLPLL). The POTRA domain maps to 37–111 (LPLKEVHIRS…NGLDVVVEEH (75 aa)). At 38–236 (PLKEVHIRSN…VSGFAARGTR (199 aa)) the chain is on the periplasmic side.

The protein belongs to the FtsQ/DivIB family. FtsQ subfamily. As to quaternary structure, part of a complex composed of FtsB, FtsL and FtsQ.

It localises to the cell inner membrane. Essential cell division protein. May link together the upstream cell division proteins, which are predominantly cytoplasmic, with the downstream cell division proteins, which are predominantly periplasmic. May control correct divisome assembly. This is Cell division protein FtsQ from Nitrosospira multiformis (strain ATCC 25196 / NCIMB 11849 / C 71).